The primary structure comprises 165 residues: Large ribosomal subunit protein uL15 (165 aa).

Residues Met1–Asn44 form a disordered region. The span at Arg21–Gly37 shows a compositional bias: gly residues.

Belongs to the universal ribosomal protein uL15 family. In terms of assembly, part of the 50S ribosomal subunit.

In terms of biological role, binds to the 23S rRNA. The protein is Large ribosomal subunit protein uL15 of Anaeromyxobacter dehalogenans (strain 2CP-1 / ATCC BAA-258).